The primary structure comprises 173 residues: Peptide methionine sulfoxide reductase MsrA (173 aa).

Cys10 is a catalytic residue.

This sequence belongs to the MsrA Met sulfoxide reductase family.

It carries out the reaction L-methionyl-[protein] + [thioredoxin]-disulfide + H2O = L-methionyl-(S)-S-oxide-[protein] + [thioredoxin]-dithiol. It catalyses the reaction [thioredoxin]-disulfide + L-methionine + H2O = L-methionine (S)-S-oxide + [thioredoxin]-dithiol. Has an important function as a repair enzyme for proteins that have been inactivated by oxidation. Catalyzes the reversible oxidation-reduction of methionine sulfoxide in proteins to methionine. The protein is Peptide methionine sulfoxide reductase MsrA of Psychrobacter arcticus (strain DSM 17307 / VKM B-2377 / 273-4).